The chain runs to 77 residues: Envelope protein US9 homolog (77 aa).

A Di-leucine internalization motif motif is present at residues Leu-12 to Leu-13.

This sequence belongs to the alphaherpesvirinae envelope protein US9 family.

The protein is Envelope protein US9 homolog of Chlorocebus aethiops (Green monkey).